The following is a 118-amino-acid chain: Small ribosomal subunit protein uS13 (118 aa).

Residues 91 to 118 (HRRSLPVRGQRTKTNARTRKGPRKPIKA) form a disordered region.

The protein belongs to the universal ribosomal protein uS13 family. In terms of assembly, part of the 30S ribosomal subunit. Forms a loose heterodimer with protein S19. Forms two bridges to the 50S subunit in the 70S ribosome.

In terms of biological role, located at the top of the head of the 30S subunit, it contacts several helices of the 16S rRNA. In the 70S ribosome it contacts the 23S rRNA (bridge B1a) and protein L5 of the 50S subunit (bridge B1b), connecting the 2 subunits; these bridges are implicated in subunit movement. Contacts the tRNAs in the A and P-sites. This chain is Small ribosomal subunit protein uS13, found in Francisella philomiragia subsp. philomiragia (strain ATCC 25017 / CCUG 19701 / FSC 153 / O#319-036).